We begin with the raw amino-acid sequence, 325 residues long: Large ribosomal subunit protein uL18 (325 aa).

The disordered stretch occupies residues 247–300 (IRIPPSRRNPRRRSPRSGGRWPSCRSPPARRRSRSTRPTSWPRSRPTSKPKRPR). 2 stretches are compositionally biased toward low complexity: residues 262 to 273 (RSGGRWPSCRSP) and 282 to 291 (TRPTSWPRSR).

This sequence belongs to the universal ribosomal protein uL18 family. Component of the large ribosomal subunit (LSU).

The protein resides in the cytoplasm. It localises to the nucleus. Its function is as follows. Component of the ribosome, a large ribonucleoprotein complex responsible for the synthesis of proteins in the cell. The small ribosomal subunit (SSU) binds messenger RNAs (mRNAs) and translates the encoded message by selecting cognate aminoacyl-transfer RNA (tRNA) molecules. The large subunit (LSU) contains the ribosomal catalytic site termed the peptidyl transferase center (PTC), which catalyzes the formation of peptide bonds, thereby polymerizing the amino acids delivered by tRNAs into a polypeptide chain. The nascent polypeptides leave the ribosome through a tunnel in the LSU and interact with protein factors that function in enzymatic processing, targeting, and the membrane insertion of nascent chains at the exit of the ribosomal tunnel. In Anopheles gambiae (African malaria mosquito), this protein is Large ribosomal subunit protein uL18 (RpL5).